The chain runs to 616 residues: Chaperone protein HscA (616 aa).

It belongs to the heat shock protein 70 family.

In terms of biological role, chaperone involved in the maturation of iron-sulfur cluster-containing proteins. Has a low intrinsic ATPase activity which is markedly stimulated by HscB. Involved in the maturation of IscU. In Escherichia coli O45:K1 (strain S88 / ExPEC), this protein is Chaperone protein HscA.